The primary structure comprises 113 residues: Prefoldin subunit beta (113 aa).

The protein belongs to the prefoldin subunit beta family. As to quaternary structure, heterohexamer of two alpha and four beta subunits.

Its subcellular location is the cytoplasm. Its function is as follows. Molecular chaperone capable of stabilizing a range of proteins. Seems to fulfill an ATP-independent, HSP70-like function in archaeal de novo protein folding. This chain is Prefoldin subunit beta (pfdB), found in Methanocaldococcus jannaschii (strain ATCC 43067 / DSM 2661 / JAL-1 / JCM 10045 / NBRC 100440) (Methanococcus jannaschii).